The following is a 105-amino-acid chain: MHGKVPTLQDVVLELTPQTEIDLQCNEQLDSSEDEDEDEVDHLQERPQQARQAKQHTCYLIHVPCCECKFVVQLDIQSTKEDLRVVQQLLMGALTVTCPLCASSN.

The interval 1–45 (MHGKVPTLQDVVLELTPQTEIDLQCNEQLDSSEDEDEDEVDHLQE) is E7 terminal domain. The LXCXE motif; interaction with host RB1 and TMEM173/STING motif lies at 23–27 (LQCNE). Residues 29–48 (LDSSEDEDEDEVDHLQERPQ) form a disordered region. Positions 30–40 (DSSEDEDEDEV) are enriched in acidic residues. Residues 65–101 (CCECKFVVQLDIQSTKEDLRVVQQLLMGALTVTCPLC) fold into a zinc finger. A Nuclear export signal motif is present at residues 83-91 (LRVVQQLLM).

This sequence belongs to the papillomaviridae E7 protein family. Homodimer. Homooligomer. Interacts with host RB1; this interaction induces dissociation of RB1-E2F1 complex thereby disrupting RB1 activity. Interacts with host EP300; this interaction represses EP300 transcriptional activity. Interacts with protein E2; this interaction inhibits E7 oncogenic activity. Interacts with host TMEM173/STING; this interaction impairs the ability of TMEM173/STING to sense cytosolic DNA and promote the production of type I interferon (IFN-alpha and IFN-beta). Highly phosphorylated.

The protein localises to the host cytoplasm. Its subcellular location is the host nucleus. Plays a role in viral genome replication by driving entry of quiescent cells into the cell cycle. Stimulation of progression from G1 to S phase allows the virus to efficiently use the cellular DNA replicating machinery to achieve viral genome replication. E7 protein has both transforming and trans-activating activities. Induces the disassembly of the E2F1 transcription factor from RB1, with subsequent transcriptional activation of E2F1-regulated S-phase genes. Interferes with host histone deacetylation mediated by HDAC1 and HDAC2, leading to transcription activation. Also plays a role in the inhibition of both antiviral and antiproliferative functions of host interferon alpha. Interaction with host TMEM173/STING impairs the ability of TMEM173/STING to sense cytosolic DNA and promote the production of type I interferon (IFN-alpha and IFN-beta). In Human papillomavirus 56, this protein is Protein E7.